A 446-amino-acid chain; its full sequence is Tubulin gamma chain (446 aa).

Position 142 to 148 (142 to 148 (AGGTGSG)) interacts with GTP.

The protein belongs to the tubulin family.

The protein localises to the cytoplasm. It localises to the cytoskeleton. The protein resides in the microtubule organizing center. Its subcellular location is the spindle pole body. In terms of biological role, tubulin is the major constituent of microtubules. The gamma chain is found at microtubule organizing centers (MTOC) such as the spindle poles or the centrosome, suggesting that it is involved in the minus-end nucleation of microtubule assembly. The chain is Tubulin gamma chain (tug1) from Schizosaccharomyces japonicus (Fission yeast).